A 1229-amino-acid chain; its full sequence is ABC transporter B family member 3 (1229 aa).

Residues Val22–Met42 form a helical membrane-spanning segment. An ABC transmembrane type-1 1 domain is found at Met25 to Ala313. The N-linked (GlcNAc...) asparagine glycan is linked to Asn56. A run of 5 helical transmembrane segments spans residues Phe73–Ile93, Phe149–Leu169, Leu172–Val192, Gly252–Phe272, and Gly281–Leu301. One can recognise an ABC transporter 1 domain in the interval Ile348–Arg584. An ATP-binding site is contributed by Gly383 to Ser390. N-linked (GlcNAc...) asparagine glycosylation occurs at Asn450. A compositionally biased stretch (basic and acidic residues) spans Arg594–Ile606. The interval Arg594–Ile614 is disordered. Residue Asn645 is glycosylated (N-linked (GlcNAc...) asparagine). Helical transmembrane passes span Ile661–Ile681 and Met706–Phe726. The region spanning Leu662–Lys949 is the ABC transmembrane type-1 2 domain. N-linked (GlcNAc...) asparagine glycosylation is present at Asn758. 3 consecutive transmembrane segments (helical) span residues Ile797–Ile817, Gly888–Val908, and Val923–Phe943. The ABC transporter 2 domain maps to Ile984 to Gln1222. Residue Gly1019–Ser1026 coordinates ATP. Asn1073 and Asn1173 each carry an N-linked (GlcNAc...) asparagine glycan.

This sequence belongs to the ABC transporter superfamily. ABCB family. Multidrug resistance exporter (TC 3.A.1.201) subfamily.

The protein localises to the membrane. The sequence is that of ABC transporter B family member 3 (ABCB3) from Arabidopsis thaliana (Mouse-ear cress).